The following is a 1284-amino-acid chain: DNA-directed RNA polymerase subunit beta (1284 aa).

Belongs to the RNA polymerase beta chain family. In terms of assembly, the RNAP catalytic core consists of 2 alpha, 1 beta, 1 beta' and 1 omega subunit. When a sigma factor is associated with the core the holoenzyme is formed, which can initiate transcription.

The enzyme catalyses RNA(n) + a ribonucleoside 5'-triphosphate = RNA(n+1) + diphosphate. Functionally, DNA-dependent RNA polymerase catalyzes the transcription of DNA into RNA using the four ribonucleoside triphosphates as substrates. This chain is DNA-directed RNA polymerase subunit beta, found in Mesoplasma florum (strain ATCC 33453 / NBRC 100688 / NCTC 11704 / L1) (Acholeplasma florum).